The following is a 510-amino-acid chain: Probable DNA ligase (510 aa).

E210 provides a ligand contact to ATP. Residue K212 is the N6-AMP-lysine intermediate of the active site. 6 residues coordinate ATP: R217, R232, E261, F296, R367, and K373.

It belongs to the ATP-dependent DNA ligase family. Mg(2+) serves as cofactor.

The catalysed reaction is ATP + (deoxyribonucleotide)n-3'-hydroxyl + 5'-phospho-(deoxyribonucleotide)m = (deoxyribonucleotide)n+m + AMP + diphosphate.. In terms of biological role, DNA ligase that seals nicks in double-stranded DNA during DNA replication, DNA recombination and DNA repair. This chain is Probable DNA ligase, found in Saccharopolyspora erythraea (strain ATCC 11635 / DSM 40517 / JCM 4748 / NBRC 13426 / NCIMB 8594 / NRRL 2338).